Reading from the N-terminus, the 252-residue chain is Triosephosphate isomerase (252 aa).

Residue 9 to 11 (NWK) participates in substrate binding. The active-site Electrophile is H95. The active-site Proton acceptor is the E167. Substrate-binding positions include G173, S213, and 234–235 (GG). Phosphoserine is present on S213.

This sequence belongs to the triosephosphate isomerase family. Homodimer.

Its subcellular location is the cytoplasm. It catalyses the reaction D-glyceraldehyde 3-phosphate = dihydroxyacetone phosphate. It functions in the pathway carbohydrate biosynthesis; gluconeogenesis. The protein operates within carbohydrate degradation; glycolysis; D-glyceraldehyde 3-phosphate from glycerone phosphate: step 1/1. Involved in the gluconeogenesis. Catalyzes stereospecifically the conversion of dihydroxyacetone phosphate (DHAP) to D-glyceraldehyde-3-phosphate (G3P). This is Triosephosphate isomerase from Oceanobacillus iheyensis (strain DSM 14371 / CIP 107618 / JCM 11309 / KCTC 3954 / HTE831).